A 209-amino-acid chain; its full sequence is Ribonuclease HII (209 aa).

The 192-residue stretch at 7–198 (GPVAGVDEAG…VAKAHQEWLH (192 aa)) folds into the RNase H type-2 domain. A divalent metal cation is bound by residues Asp13, Glu14, and Asp107.

Belongs to the RNase HII family. Requires Mn(2+) as cofactor. Mg(2+) is required as a cofactor.

It is found in the cytoplasm. The enzyme catalyses Endonucleolytic cleavage to 5'-phosphomonoester.. Its function is as follows. Endonuclease that specifically degrades the RNA of RNA-DNA hybrids. This chain is Ribonuclease HII, found in Corynebacterium glutamicum (strain ATCC 13032 / DSM 20300 / JCM 1318 / BCRC 11384 / CCUG 27702 / LMG 3730 / NBRC 12168 / NCIMB 10025 / NRRL B-2784 / 534).